The sequence spans 545 residues: Chaperonin GroEL 2 (545 aa).

ATP is bound by residues 29–32, 86–90, Gly413, 479–481, and Asp495; these read TLGP, DGTTT, and NAA.

The protein belongs to the chaperonin (HSP60) family. Forms a cylinder of 14 subunits composed of two heptameric rings stacked back-to-back. Interacts with the co-chaperonin GroES.

The protein resides in the cytoplasm. The catalysed reaction is ATP + H2O + a folded polypeptide = ADP + phosphate + an unfolded polypeptide.. Functionally, together with its co-chaperonin GroES, plays an essential role in assisting protein folding. The GroEL-GroES system forms a nano-cage that allows encapsulation of the non-native substrate proteins and provides a physical environment optimized to promote and accelerate protein folding. This Prochlorococcus marinus (strain MIT 9215) protein is Chaperonin GroEL 2.